The sequence spans 212 residues: UPF0319 protein PBPRA2789 (212 aa).

The signal sequence occupies residues 1–21 (MKKILLAFTLPLVLASQTAMA).

This sequence belongs to the UPF0319 family.

This chain is UPF0319 protein PBPRA2789, found in Photobacterium profundum (strain SS9).